The following is a 163-amino-acid chain: uncharacterized protein (163 aa).

The interval 128–163 (PKKEKIKKAKRKKKGAKRASKKQKAKSKSARKSRRV) is disordered. The segment covering 129–163 (KKEKIKKAKRKKKGAKRASKKQKAKSKSARKSRRV) has biased composition (basic residues).

This is an uncharacterized protein from Sulfurisphaera tokodaii (strain DSM 16993 / JCM 10545 / NBRC 100140 / 7) (Sulfolobus tokodaii).